A 571-amino-acid polypeptide reads, in one-letter code: MTLNGWMQIALYGAVVLALVRPLGGYMTRVFNGERTLLSPALAPIERGLYRISGIDARQEQTWLAYAGAMILFNVAGFVLLYALLRLQALLPFNPADQAAVAPDLAFNTATSFVTNTNWQSYGGETTLSYLSQMLGLTHQNFVSAASGMAVAVALIRGFARASTKTLGSFWVDMTRATLYVLLPLSTVLALFYVSQGMPQTLSPYVEATTLEGAKQTIAVGPVASQVAIKMLGTNGGGFFNANAAHPFENPTALSNFLQMLSIFVIGAALTNVFGRMVGDERQGWAILAAMGLLFLAGVTVTYWAEANAHGVLSNLGLTGGNMEGKEVRFGIAASALFAVITTAASCGAVNAMHDSFTALGGLIPLLNMQLGEVIIGGVGAGLYGMLVFVVVAIFVAGLMVGRTPEYLGKKIEAREVKMAMLGILCLPLMMLGFTAIATVVPAGLAGPANAGPHGFSEILYAYTSAAANNGSAFGGLTANTLFYNTTLAIGMLVGRFFVKIPVLAIAGSLAAKKRLPASAGTFPTHGGLFVGLLVGVVLIIGGLTFFPALALGPVVEHFAGAAGQTFATGG.

A run of 12 helical transmembrane segments spans residues 5-25 (GWMQIALYGAVVLALVRPLGG), 64-84 (LAYAGAMILFNVAGFVLLYAL), 136-156 (GLTHQNFVSAASGMAVAVALI), 179-199 (LYVLLPLSTVLALFYVSQGMP), 220-240 (VGPVASQVAIKMLGTNGGGFF), 254-274 (LSNFLQMLSIFVIGAALTNVF), 285-305 (WAILAAMGLLFLAGVTVTYWA), 330-350 (FGIAASALFAVITTAASCGAV), 375-395 (IIGGVGAGLYGMLVFVVVAIF), 421-441 (MLGILCLPLMMLGFTAIATVV), 488-508 (LAIGMLVGRFFVKIPVLAIAG), and 527-547 (GGLFVGLLVGVVLIIGGLTFF).

The protein belongs to the KdpA family. In terms of assembly, the system is composed of three essential subunits: KdpA, KdpB and KdpC.

The protein resides in the cell inner membrane. Its function is as follows. Part of the high-affinity ATP-driven potassium transport (or Kdp) system, which catalyzes the hydrolysis of ATP coupled with the electrogenic transport of potassium into the cytoplasm. This subunit binds the periplasmic potassium ions and delivers the ions to the membrane domain of KdpB through an intramembrane tunnel. The protein is Potassium-transporting ATPase potassium-binding subunit of Methylorubrum extorquens (strain CM4 / NCIMB 13688) (Methylobacterium extorquens).